A 331-amino-acid chain; its full sequence is MRCWSPCSLLVVIVIYCLSSHTSEAFDLAQACVESQRLSLLPICDTIFAVQQEGAQQSADDGMRSKRFIRFGRALSGDAFLRFGKNVPDLPFEDKRFLRFGRAAPQLDDLLKQALQRVESLQKADETSVRRKRSTDAAPQNNAENPEQKNDSAKITKRYIDDVEDSDVKRFMRFGKRFMRFGRNPSDAGNKLTEKRFMRFGRDPEKRFMRFGKSDDKRFMRFGRNPSDVEDELEEDKRFMRFGRGGEDDEEEAEKRFMRFGRDPEKKFMRFGKSGEDKRFMRFGRNPDEQEADKRFMRFGRGGEDDEVSTEDKRFMRFGRSADKCKGCLEG.

The N-terminal stretch at 1–25 is a signal peptide; the sequence is MRCWSPCSLLVVIVIYCLSSHTSEA. A propeptide spanning residues 26-65 is cleaved from the precursor; the sequence is FDLAQACVESQRLSLLPICDTIFAVQQEGAQQSADDGMRS. Phenylalanine amide occurs at positions 71 and 83. Positions 86–94 are excised as a propeptide; it reads NVPDLPFED. Phenylalanine 100 bears the Phenylalanine amide mark. Positions 103–168 are excised as a propeptide; it reads AAPQLDDLLK…YIDDVEDSDV (66 aa). The interval 122–158 is disordered; it reads QKADETSVRRKRSTDAAPQNNAENPEQKNDSAKITKR. Residues 146 to 158 show a composition bias toward basic and acidic residues; the sequence is PEQKNDSAKITKR. Phenylalanine amide occurs at positions 174 and 181. The propeptide occupies 184–194; sequence NPSDAGNKLTE. The residue at position 200 (phenylalanine 200) is a Phenylalanine amide. Residues 203-205 constitute a propeptide that is removed on maturation; that stretch reads DPE. At phenylalanine 211 the chain carries Phenylalanine amide. Positions 214–216 are excised as a propeptide; sequence SDD. Phenylalanine amide is present on phenylalanine 222. A propeptide spanning residues 225–236 is cleaved from the precursor; the sequence is NPSDVEDELEED. Phenylalanine 242 carries the post-translational modification Phenylalanine amide. The propeptide occupies 245-254; that stretch reads GGEDDEEEAE. At phenylalanine 260 the chain carries Phenylalanine amide. The propeptide occupies 263-265; the sequence is DPE. Phenylalanine 271 carries the post-translational modification Phenylalanine amide. A propeptide spanning residues 274–277 is cleaved from the precursor; sequence SGED. Basic and acidic residues predominate over residues 282–296; sequence RFGRNPDEQEADKRF. The segment at 282–310 is disordered; that stretch reads RFGRNPDEQEADKRFMRFGRGGEDDEVST. Phenylalanine 283 carries the phenylalanine amide modification. A propeptide spanning residues 286 to 293 is cleaved from the precursor; it reads NPDEQEAD. Phenylalanine 299 carries the post-translational modification Phenylalanine amide. A propeptide spanning residues 302–312 is cleaved from the precursor; the sequence is GGEDDEVSTED. Residue phenylalanine 318 is modified to Phenylalanine amide. The propeptide occupies 321–331; it reads SADKCKGCLEG.

This sequence belongs to the FARP (FMRFamide related peptide) family.

It localises to the secreted. Its function is as follows. Excitatory neurotransmitters that directly modulate chromatophore function by activating chromatophore expansion at the chromatophore neuromuscular junction. The polypeptide is FMRFamide-related neuropeptides (Doryteuthis pealeii (Longfin inshore squid)).